The primary structure comprises 150 residues: Arginine repressor (150 aa).

It belongs to the ArgR family.

Its subcellular location is the cytoplasm. Its pathway is amino-acid biosynthesis; L-arginine biosynthesis [regulation]. Functionally, regulates arginine biosynthesis genes. In Staphylococcus epidermidis (strain ATCC 35984 / DSM 28319 / BCRC 17069 / CCUG 31568 / BM 3577 / RP62A), this protein is Arginine repressor.